A 172-amino-acid polypeptide reads, in one-letter code: Water stress-inducible protein Rab21 (172 aa).

The interval 1–172 (MEHQGQHGHV…KIKEKLPGQH (172 aa)) is disordered. A Type A repeat occupies 3-28 (HQGQHGHVTSRVDEYGNPVGTGAGHG). A compositionally biased stretch (gly residues) spans 21–65 (VGTGAGHGQMGTAGMGTHGTTGGMGTHGTTGGMGTHGTTGTGGGQ). A Type B repeat occupies 98–115 (RRKKGIKEKIKEKLPGGN). Gly residues predominate over residues 124-139 (GGTGGAYGQQGHGTGM). A Type A repeat occupies 125 to 149 (GTGGAYGQQGHGTGMTTGTTGAHGT). Residues 140–153 (TTGTTGAHGTTTTD) show a composition bias toward low complexity. The segment covering 154 to 172 (TGEKKGIMDKIKEKLPGQH) has biased composition (basic and acidic residues). The Type B repeat unit spans residues 156–172 (EKKGIMDKIKEKLPGQH).

This sequence belongs to the plant dehydrin family.

Its subcellular location is the cytoplasm. This chain is Water stress-inducible protein Rab21 (RAB21), found in Oryza sativa subsp. indica (Rice).